Consider the following 145-residue polypeptide: MAKEISKVVKLQVKGGAANPSPPVGPALGAAGVNIMEFCKQFNARTQDKPGKICPVQITVYKDKSFDFVVKTPPAAVQLMEAAKLKSGSGEPNRKKVASVTWEQIRTIAEDKMPDLNAFTIEKAMSMVAGTARSMGITVSGDAPF.

This sequence belongs to the universal ribosomal protein uL11 family. Part of the ribosomal stalk of the 50S ribosomal subunit. Interacts with L10 and the large rRNA to form the base of the stalk. L10 forms an elongated spine to which L12 dimers bind in a sequential fashion forming a multimeric L10(L12)X complex. Post-translationally, one or more lysine residues are methylated.

Functionally, forms part of the ribosomal stalk which helps the ribosome interact with GTP-bound translation factors. This is Large ribosomal subunit protein uL11 from Flavobacterium johnsoniae (strain ATCC 17061 / DSM 2064 / JCM 8514 / BCRC 14874 / CCUG 350202 / NBRC 14942 / NCIMB 11054 / UW101) (Cytophaga johnsonae).